The primary structure comprises 856 residues: cGMP-dependent protein kinase (856 aa).

The segment at 1-33 is autoinhibitory segment; it reads MDDDEIIPKKNHPSNERNKKKAILSHEDFTGED. CNMP-binding domain stretches follow at residues 62 to 177, 180 to 279, 299 to 402, and 422 to 521; these read VCST…FIDS, VFDM…VVLG, IFKQ…LGNN, and IFRY…LQII. 3',5'-cyclic GMP is bound by residues Lys117, Gly126, Glu127, Ala129, Arg136, and Ser137. Residues Arg477, Gly486, Glu487, Ala489, Arg496, and Thr497 each contribute to the 3',5'-cyclic GMP site. The Protein kinase domain maps to 545 to 802; it reads LLTERIIGRG…FKDIKENSFF (258 aa). Residues 551–559 and Lys574 contribute to the ATP site; that span reads IGRGTFGIV. The active-site Proton acceptor is Asp668. Positions 803 to 856 constitute an AGC-kinase C-terminal domain; sequence ADFDWDRLAGRLLEPPLISKSETYAEDIDVKQIEQEEEDNANTEIDDENWDIDF. The disordered stretch occupies residues 837–856; that stretch reads QEEEDNANTEIDDENWDIDF.

Belongs to the protein kinase superfamily. AGC Ser/Thr protein kinase family. cGMP subfamily. Monomer. It depends on Mg(2+) as a cofactor. Autophosphorylated.

The protein resides in the cytoplasm. It is found in the endoplasmic reticulum membrane. The enzyme catalyses L-seryl-[protein] + ATP = O-phospho-L-seryl-[protein] + ADP + H(+). The catalysed reaction is L-threonyl-[protein] + ATP = O-phospho-L-threonyl-[protein] + ADP + H(+). Activated by cGMP. Not activated by cAMP. cGMP binding allosterically triggers a conformational change at the alpha C-helix of cGMP-binding domain 4, which bridges the regulatory and catalytic domains, causing the capping triad, composed of Arg-488, Gln-536 and Asp-537, to form and stabilize the active conformation. The cGMP-binding domains acts cooperatively to activate PKG. Functionally, serine/threonine protein kinase which acts as a downstream effector of the second messenger cGMP. Controls the release of Ca(2+) from intracellular stores by regulating phosphoinositide biosynthesis. Ca(2+) signals are essential for merozoite and sporozoite invasion and egress from host hepatocytes and erythrocytes, and, in the mosquito vector, for gametocyte activation, and ookinete and sporozoite motility. During the host liver stage, regulates the initial invasion of host hepatocytes by sporozoites by regulating sporozoite motility and microneme exocytosis. Following parasite development in the hepatocytes, required for the release of merosomes, a vesicle containing the mature merozoites. During the asexual blood stage, required for the progression from schizont to the ring stage following merozoite invasion of host erythrocytes and for merozoite egress. Regulates merozoite egress by promoting the release of exonemes and micronemes which contain proteins essential for egress. Phosphorylates CDPK1 predominantly at the late schizont stage; phosphorylation at 'Ser-64' regulates CDPK1 protein-protein interaction and phosphorylation at 'Thr-231' may regulate CDPK1 kinase activity. In the mosquito vector, required for the initiation of gametogenesis induced by xanthurenic acid, specifically the gametocyte differentiation from the crescent-shaped form to the spherical form. Required for the gliding motility of ookinetes to reach and penetrate the midgut epithelium by promoting Ca(2+)-mediated activation of CDPK1 and CDPK4. Also required for microneme secretion in ookinete by promoting Ca(2+)-mediated activation of CDPK3. The protein is cGMP-dependent protein kinase of Plasmodium berghei (strain Anka).